We begin with the raw amino-acid sequence, 505 residues long: tRNA-2-methylthio-N(6)-dimethylallyladenosine synthase (505 aa).

The 117-residue stretch at 10-126 folds into the MTTase N-terminal domain; sequence RSYEVRTYGC…LPALLDRARH (117 aa). 6 residues coordinate [4Fe-4S] cluster: Cys19, Cys55, Cys89, Cys163, Cys167, and Cys170. A Radical SAM core domain is found at 149–385; it reads RESAYAGWVS…IALQEQITLE (237 aa). In terms of domain architecture, TRAM spans 388–459; that stretch reads QKLVGAEVEL…PHHLVADTPV (72 aa).

The protein belongs to the methylthiotransferase family. MiaB subfamily. Monomer. Requires [4Fe-4S] cluster as cofactor.

Its subcellular location is the cytoplasm. The catalysed reaction is N(6)-dimethylallyladenosine(37) in tRNA + (sulfur carrier)-SH + AH2 + 2 S-adenosyl-L-methionine = 2-methylsulfanyl-N(6)-dimethylallyladenosine(37) in tRNA + (sulfur carrier)-H + 5'-deoxyadenosine + L-methionine + A + S-adenosyl-L-homocysteine + 2 H(+). Functionally, catalyzes the methylthiolation of N6-(dimethylallyl)adenosine (i(6)A), leading to the formation of 2-methylthio-N6-(dimethylallyl)adenosine (ms(2)i(6)A) at position 37 in tRNAs that read codons beginning with uridine. This Rhodococcus jostii (strain RHA1) protein is tRNA-2-methylthio-N(6)-dimethylallyladenosine synthase.